Reading from the N-terminus, the 546-residue chain is Probable protein kinase UbiB (546 aa).

Positions 124-502 (DFSVEPLASA…HVRQGQSRYL (379 aa)) constitute a Protein kinase domain. ATP contacts are provided by residues 130–138 (LASASIAQV) and lysine 153. The Proton acceptor role is filled by aspartate 288. Helical transmembrane passes span 501–521 (YLFGIGAVLLLSGTLLFIHRP) and 522–542 (EWGMMPGWLMAGGVVTWLIGW).

Belongs to the ABC1 family. UbiB subfamily.

Its subcellular location is the cell inner membrane. The protein operates within cofactor biosynthesis; ubiquinone biosynthesis [regulation]. In terms of biological role, is probably a protein kinase regulator of UbiI activity which is involved in aerobic coenzyme Q (ubiquinone) biosynthesis. The chain is Probable protein kinase UbiB from Klebsiella pneumoniae subsp. pneumoniae (strain ATCC 700721 / MGH 78578).